We begin with the raw amino-acid sequence, 509 residues long: MIPDRNTRSRKAPCWRPRSLRQQLLLGVLAVVTVVLVAVGVVSVLSLSGYVTAMNDAELVESLHALNHSYTRYRDSAQTSTPTGNLPMSQAVLEFTGQTPGNLIAVLHDGVVIGSAVFSEDGARPAPPDVIRAIEAQVWDGGPPRVESLGSLGAYQVDSSAAGADRLFVGVSLSLANQIIARKKVTTVALVGAALVVTAALTVWVVGYALRPLRRVAATAAEVATMPLTDDDHQISVRVRPGDTDPDNEVGIVGHTLNRLLDNVDGALAHRVDSDLRMRQFITDASHELRTPLAAIQGYAELTRQDSSDLPPTTEYALARIESEARRMTLLVDELLLLSRLSEGEDLETEDLDLTDLVINAVNDAAVAAPTHRWVKNLPDEPVWVNGDHARLHQLVSNLLTNAWVHTQPGVTVTIGITCHRTGPNAPCVELSVTDDGPDIDPEILPHLFDRFVRASKSRSNGSGHGLGLAIVSSIVKAHRGSVTAESGNGQTVFRVRLPMIEQQIATTA.

A run of 2 helical transmembrane segments spans residues 24 to 44 and 188 to 208; these read LLLG…VVSV and VALV…VVGY. The HAMP domain maps to 207–269; sequence GYALRPLRRV…LLDNVDGALA (63 aa). The 219-residue stretch at 284–502 folds into the Histidine kinase domain; the sequence is DASHELRTPL…VFRVRLPMIE (219 aa). Phosphohistidine; by autocatalysis is present on histidine 287.

It depends on a divalent metal cation as a cofactor. In terms of processing, autophosphorylated.

It is found in the cell membrane. The enzyme catalyses ATP + protein L-histidine = ADP + protein N-phospho-L-histidine.. Its function is as follows. Member of the two-component regulatory system TrcS/TrcR. Phosphorylates TrcR. The TrcR-TrcS regulatory system may act as a transition regulatory system involved in adapting to an intracellular environment and transitioning from latency to reactivation. The protein is Sensor histidine kinase TrcS of Mycobacterium tuberculosis (strain ATCC 25618 / H37Rv).